A 97-amino-acid chain; its full sequence is Aspartyl/glutamyl-tRNA(Asn/Gln) amidotransferase subunit C (97 aa).

The protein belongs to the GatC family. As to quaternary structure, heterotrimer of A, B and C subunits.

The catalysed reaction is L-glutamyl-tRNA(Gln) + L-glutamine + ATP + H2O = L-glutaminyl-tRNA(Gln) + L-glutamate + ADP + phosphate + H(+). The enzyme catalyses L-aspartyl-tRNA(Asn) + L-glutamine + ATP + H2O = L-asparaginyl-tRNA(Asn) + L-glutamate + ADP + phosphate + 2 H(+). In terms of biological role, allows the formation of correctly charged Asn-tRNA(Asn) or Gln-tRNA(Gln) through the transamidation of misacylated Asp-tRNA(Asn) or Glu-tRNA(Gln) in organisms which lack either or both of asparaginyl-tRNA or glutaminyl-tRNA synthetases. The reaction takes place in the presence of glutamine and ATP through an activated phospho-Asp-tRNA(Asn) or phospho-Glu-tRNA(Gln). This is Aspartyl/glutamyl-tRNA(Asn/Gln) amidotransferase subunit C from Synechococcus sp. (strain JA-2-3B'a(2-13)) (Cyanobacteria bacterium Yellowstone B-Prime).